The chain runs to 210 residues: Thymidylate kinase (210 aa).

10 to 17 (GPEGAGKS) contacts ATP.

Belongs to the thymidylate kinase family.

The catalysed reaction is dTMP + ATP = dTDP + ADP. In terms of biological role, phosphorylation of dTMP to form dTDP in both de novo and salvage pathways of dTTP synthesis. The protein is Thymidylate kinase of Pseudomonas savastanoi pv. phaseolicola (strain 1448A / Race 6) (Pseudomonas syringae pv. phaseolicola (strain 1448A / Race 6)).